Here is a 382-residue protein sequence, read N- to C-terminus: Mannitol-1-phosphate 5-dehydrogenase (382 aa).

Position 3–14 (3–14 (ALHFGAGNIGRG)) interacts with NAD(+). Lys269 carries the N6-acetyllysine modification.

The protein belongs to the mannitol dehydrogenase family.

It catalyses the reaction D-mannitol 1-phosphate + NAD(+) = beta-D-fructose 6-phosphate + NADH + H(+). This is Mannitol-1-phosphate 5-dehydrogenase from Escherichia coli O81 (strain ED1a).